A 313-amino-acid chain; its full sequence is Olfactory receptor 1f45 (313 aa).

Residues 1-25 (MSSTNQSSVTEFLLLGLSRQPQQQQ) lie on the Extracellular side of the membrane. The N-linked (GlcNAc...) asparagine glycan is linked to Asn-5. Residues 26–50 (LLFLLFLIMYLATVLGNLLIILAIG) traverse the membrane as a helical segment. Over 51–57 (TDSRLHT) the chain is Cytoplasmic. Residues 58-79 (PMYFFLSNLSFVDVCFSSTTVP) form a helical membrane-spanning segment. Topologically, residues 80 to 100 (KVLANHILGSQAISFSGCLTQ) are extracellular. A disulfide bond links Cys-97 and Cys-189. Residues 101–120 (LYFLAVFGNMDNFLLAVMSY) traverse the membrane as a helical segment. Topologically, residues 121 to 139 (DRFVAICHPLHYTTKMTRQ) are cytoplasmic. The helical transmembrane segment at 140–158 (LCVLLVVGSWVVANMNCLL) threads the bilayer. The Extracellular segment spans residues 159–196 (HILLMARLSFCADNMIPHFFCDGTPLLKLSCSDTHLNE). Residues 197 to 219 (LMILTEGAVVMVTPFVCILISYI) form a helical membrane-spanning segment. Residues 220-236 (HITCAVLRVSSPRGGWK) are Cytoplasmic-facing. The helical transmembrane segment at 237–260 (SFSTCGSHLAVVCLFYGTVIAVYF) threads the bilayer. Over 261-272 (NPSSSHLAGRDM) the chain is Extracellular. The helical transmembrane segment at 273 to 292 (AAAVMYAVVTPMLNPFIYSL) threads the bilayer. Topologically, residues 293-313 (RNSDMKAALRKVLAMRFPSKQ) are cytoplasmic.

The protein belongs to the G-protein coupled receptor 1 family. In terms of tissue distribution, olfactory epithelium.

The protein resides in the cell membrane. Odorant receptor. This is Olfactory receptor 1f45 (Or1f45) from Rattus norvegicus (Rat).